A 69-amino-acid polypeptide reads, in one-letter code: Fungal defensin oryzeasin (69 aa).

The signal sequence occupies residues 1-18 (MKLLTVAFSLLLLGQVHA). A propeptide spanning residues 19 to 26 (SPLVLDKR) is cleaved from the precursor. 3 cysteine pairs are disulfide-bonded: Cys-29–Cys-60, Cys-44–Cys-66, and Cys-48–Cys-68.

Belongs to the invertebrate defensin family.

The protein localises to the secreted. It localises to the target cell membrane. In terms of biological role, shows antibacterial activity against numerous Gram-positive bacteria. It selectively inhibits peptidoglycan biosynthesis through complex formation with the cell wall precursor lipid II (1:1 molar ratio) thus inhibiting cell wall synthesis. This Aspergillus oryzae (strain ATCC 42149 / RIB 40) (Yellow koji mold) protein is Fungal defensin oryzeasin.